A 456-amino-acid polypeptide reads, in one-letter code: Two pore potassium channel c (456 aa).

The span at 1–19 shows a compositional bias: low complexity; the sequence is MDTEPLLSPLSPSPHLLHP. The segment at 1–112 is disordered; sequence MDTEPLLSPL…PPSLFDFIGG (112 aa). Over 1-152 the chain is Cytoplasmic; it reads MDTEPLLSPL…RNPPPPPRRP (152 aa). The span at 52–67 shows a compositional bias: pro residues; that stretch reads HPPPPPPPPPPPPPPP. The helical transmembrane segment at 153 to 173 threads the bilayer; the sequence is AIVLHAFLFLLAYLAMGVTFY. The pore-forming intramembrane region spans 192–211; it reads DALYFCIVTLCTIGYGDITP. Residues 223 to 243 form a helical membrane-spanning segment; the sequence is FVLIGFGFVDILLSGMVSYVL. The Cytoplasmic portion of the chain corresponds to 244 to 279; sequence DLQEHLLITALKNPRSVRKHRHNYIFDLKKGRMRVR. Residues 280 to 300 traverse the membrane as a helical segment; the sequence is MKVALALTVVAICVGVGAAVL. Residues 310-329 constitute an intramembrane region (pore-forming); sequence DAVYLAVMSVTTVGYGDHAF. Residues 336 to 356 traverse the membrane as a helical segment; that stretch reads LFASAWLLVSTLAVARAFLYL. Topologically, residues 357–456 are cytoplasmic; it reads AEMRIDKRHR…LNEKKKGKKS (100 aa). EF-hand domains follow at residues 373 to 408 and 412 to 447; these read LSRDMTVSEFLAADIDNNGYVTKSEFVVYKLKEMGK and KDIMMICDQFQRMDSGNCGKITLSDLLESHQLVTDL. 8 residues coordinate Ca(2+): aspartate 386, aspartate 388, asparagine 390, tyrosine 392, glutamate 397, aspartate 425, lysine 431, and aspartate 436.

It belongs to the two pore domain potassium channel (TC 1.A.1.7) family. As to quaternary structure, homodimer.

The protein resides in the membrane. Inward-rectifying potassium channel. The polypeptide is Two pore potassium channel c (TPKC) (Oryza sativa subsp. japonica (Rice)).